A 120-amino-acid polypeptide reads, in one-letter code: Ribonuclease P protein component (120 aa).

It belongs to the RnpA family. Consists of a catalytic RNA component (M1 or rnpB) and a protein subunit.

It catalyses the reaction Endonucleolytic cleavage of RNA, removing 5'-extranucleotides from tRNA precursor.. Functionally, RNaseP catalyzes the removal of the 5'-leader sequence from pre-tRNA to produce the mature 5'-terminus. It can also cleave other RNA substrates such as 4.5S RNA. The protein component plays an auxiliary but essential role in vivo by binding to the 5'-leader sequence and broadening the substrate specificity of the ribozyme. The polypeptide is Ribonuclease P protein component (Blochmanniella floridana).